The chain runs to 488 residues: MAEATDVVLVGGGIMSATLGVLLKELEPSWEITLIERLEDVALESSNAWNNAGTGHSALCELNYAPLGANGIIDPARALNIAEQFHVSRQFWATLVAEGKLEDNSFINAVPHMSLVMNEDHCSYLQKRYDAFKTQKLFENMEFSTDRNKISDWAPLMMRGRDENQPVAANYSAEGTDVDFGRLTRQMVKYLQGKGVKTEFNRHVEDIKRESDGAWVLKTADTRNPDGQLTLRTRFLFLGAGGGALTLLQKSGIPEGKGYGGFPVSGLFFRNSNPETAEQHNAKVYGQASVGAPPMSVPHLDTRNVDGKRHLMFGPYAGFRSNFLKQGSLMDLPLSIHMDNLYPMLRAGWANMPLTKYLLGELRKTKEERFASLLEYYPEANPDDWELITAGQRVQIIKKDSEKGGVLQFGTEIVAHADGSLAALLGASPGASTAVPLMIRLMHQCFPERTPSWEGRLKELVPGYGIKLNENPERADEIIAYTAKVLDI.

This sequence belongs to the MQO family. FAD serves as cofactor.

The enzyme catalyses (S)-malate + a quinone = a quinol + oxaloacetate. The protein operates within carbohydrate metabolism; tricarboxylic acid cycle; oxaloacetate from (S)-malate (quinone route): step 1/1. The protein is Probable malate:quinone oxidoreductase of Neisseria meningitidis serogroup A / serotype 4A (strain DSM 15465 / Z2491).